A 1556-amino-acid polypeptide reads, in one-letter code: Disco-interacting protein 2 homolog C (1556 aa).

One can recognise a DMAP1-binding domain in the interval 7–120; it reads EGMALPLEVR…PMPSKRRSLV (114 aa). Disordered stretches follow at residues 47 to 157 and 170 to 189; these read YLPQ…SQGS and GSTT…SGAA. The span at 81 to 93 shows a compositional bias: basic and acidic residues; it reads GSRDERYRSDVHT. Composition is skewed to polar residues over residues 120–136 and 144–157; these read VVQT…TSSG and QGDS…SQGS. Residues 170–183 are compositionally biased toward low complexity; it reads GSTTSTTSSSSTQS. The residue at position 264 (T264) is a Phosphothreonine.

This sequence belongs to the DIP2 family.

The protein is Disco-interacting protein 2 homolog C (DIP2C) of Homo sapiens (Human).